The chain runs to 368 residues: Biotin synthase (368 aa).

Residues 74-309 enclose the Radical SAM core domain; it reads CCGNVVDLCS…QQILRYAGGR (236 aa). 3 residues coordinate [4Fe-4S] cluster: Cys-92, Cys-96, and Cys-99. Residues Cys-137, Cys-174, Cys-234, and Arg-304 each coordinate [2Fe-2S] cluster.

The protein belongs to the radical SAM superfamily. Biotin synthase family. As to quaternary structure, homodimer. [4Fe-4S] cluster serves as cofactor. The cofactor is [2Fe-2S] cluster.

It catalyses the reaction (4R,5S)-dethiobiotin + (sulfur carrier)-SH + 2 reduced [2Fe-2S]-[ferredoxin] + 2 S-adenosyl-L-methionine = (sulfur carrier)-H + biotin + 2 5'-deoxyadenosine + 2 L-methionine + 2 oxidized [2Fe-2S]-[ferredoxin]. It participates in cofactor biosynthesis; biotin biosynthesis; biotin from 7,8-diaminononanoate: step 2/2. Functionally, catalyzes the conversion of dethiobiotin (DTB) to biotin by the insertion of a sulfur atom into dethiobiotin via a radical-based mechanism. This chain is Biotin synthase, found in Rippkaea orientalis (strain PCC 8801 / RF-1) (Cyanothece sp. (strain PCC 8801)).